Reading from the N-terminus, the 134-residue chain is Large ribosomal subunit protein uL16c (134 aa).

A compositionally biased stretch (basic residues) spans 1–17 (MLSPKRTRFRKQHRGRM). The segment at 1–21 (MLSPKRTRFRKQHRGRMKGIS) is disordered.

This sequence belongs to the universal ribosomal protein uL16 family. As to quaternary structure, part of the 50S ribosomal subunit.

The protein localises to the plastid. It localises to the chloroplast. The polypeptide is Large ribosomal subunit protein uL16c (Solanum bulbocastanum (Wild potato)).